The primary structure comprises 98 residues: Protein E7 (98 aa).

The segment at 1 to 40 (MHGDTPTLHEYMLDLQPETTDLYCYEQLNDSSEEEDEIDG) is E7 terminal domain. Positions 22 to 26 (LYCYE) match the LXCXE motif; interaction with host RB1 and TMEM173/STING motif. Residues 58–94 (CCKCDSTLRLCVQSTHVDIRTLEDLLMGTLGIVCPIC) fold into a zinc finger. The short motif at 76 to 84 (IRTLEDLLM) is the Nuclear export signal element.

This sequence belongs to the papillomaviridae E7 protein family. Homodimer. Homooligomer. Interacts with host RB1; this interaction induces dissociation of RB1-E2F1 complex thereby disrupting RB1 activity. Interacts with host EP300; this interaction represses EP300 transcriptional activity. Forms a complex with CHD4 and HDAC1, thereby altering the action of host histone deacetylation. A similar complex involving E7, CHD4 and HDAC2 may also form. Interacts with protein E2; this interaction inhibits E7 oncogenic activity. In terms of processing, highly phosphorylated.

The protein localises to the host cytoplasm. Its subcellular location is the host nucleus. Plays a role in viral genome replication by driving entry of quiescent cells into the cell cycle. Stimulation of progression from G1 to S phase allows the virus to efficiently use the cellular DNA replicating machinery to achieve viral genome replication. E7 protein has both transforming and trans-activating activities. Induces the disassembly of the E2F1 transcription factor from RB1, with subsequent transcriptional activation of E2F1-regulated S-phase genes. Interferes with host histone deacetylation mediated by HDAC1 and HDAC2, leading to transcription activation. Also plays a role in the inhibition of both antiviral and antiproliferative functions of host interferon alpha. Interaction with host TMEM173/STING impairs the ability of TMEM173/STING to sense cytosolic DNA and promote the production of type I interferon (IFN-alpha and IFN-beta). This Human papillomavirus type 16 protein is Protein E7.